A 525-amino-acid chain; its full sequence is Neuropilin and tolloid-like protein 2 (525 aa).

The signal sequence occupies residues 1–22 (MALERLCSVLKVLLITVLVVEG). The Extracellular segment spans residues 23-347 (IAVAQKTQDG…GVFEQITKTH (325 aa)). 7 cysteine pairs are disulfide-bonded: C45–C72, C100–C122, C177–C207, C234–C256, C297–C309, C304–C322, and C316–C331. CUB domains are found at residues 45-159 (CGIW…YSFI) and 177-292 (CQFE…FTSF). The region spanning 296–332 (PCTSSTFFCHSNMCINNSLVCNGVQNCAYPWDENHCK) is the LDL-receptor class A domain. N311 carries N-linked (GlcNAc...) asparagine glycosylation. The helical transmembrane segment at 348–368 (GTIIGITSGIVLVLLIISILV) threads the bilayer. The Cytoplasmic segment spans residues 369 to 525 (QVKQPRKKVM…SAQASISIDF (157 aa)). S409 bears the Phosphoserine mark.

In terms of assembly, interacts with GRIK2 and GRIK3, but neither with AMPA-nor with NMDA-sensitive glutamate receptors. Post-translationally, N-glycosylated.

The protein resides in the membrane. Functionally, accessory subunit of neuronal kainate-sensitive glutamate receptors, GRIK2 and GRIK3. Increases kainate-receptor channel activity, slowing the decay kinetics of the receptors, without affecting their expression at the cell surface, and increasing the open probability of the receptor channels. Modulates the agonist sensitivity of kainate receptors. Slows the decay of kainate receptor-mediated excitatory postsynaptic currents (EPSCs), thus directly influencing synaptic transmission. The chain is Neuropilin and tolloid-like protein 2 (NETO2) from Homo sapiens (Human).